The primary structure comprises 145 residues: 3-hydroxyacyl-[acyl-carrier-protein] dehydratase FabZ (145 aa).

The active site involves His47.

This sequence belongs to the thioester dehydratase family. FabZ subfamily.

The protein localises to the cytoplasm. The enzyme catalyses a (3R)-hydroxyacyl-[ACP] = a (2E)-enoyl-[ACP] + H2O. Functionally, involved in unsaturated fatty acids biosynthesis. Catalyzes the dehydration of short chain beta-hydroxyacyl-ACPs and long chain saturated and unsaturated beta-hydroxyacyl-ACPs. The protein is 3-hydroxyacyl-[acyl-carrier-protein] dehydratase FabZ of Geotalea uraniireducens (strain Rf4) (Geobacter uraniireducens).